The chain runs to 245 residues: tRNA (guanine-N(7)-)-methyltransferase (245 aa).

S-adenosyl-L-methionine contacts are provided by glutamate 75, glutamate 100, aspartate 127, and aspartate 150. Aspartate 150 is a catalytic residue. Substrate is bound by residues lysine 154, aspartate 186, and 223-226; that span reads TKFE.

It belongs to the class I-like SAM-binding methyltransferase superfamily. TrmB family.

The catalysed reaction is guanosine(46) in tRNA + S-adenosyl-L-methionine = N(7)-methylguanosine(46) in tRNA + S-adenosyl-L-homocysteine. It participates in tRNA modification; N(7)-methylguanine-tRNA biosynthesis. In terms of biological role, catalyzes the formation of N(7)-methylguanine at position 46 (m7G46) in tRNA. In Photobacterium profundum (strain SS9), this protein is tRNA (guanine-N(7)-)-methyltransferase.